We begin with the raw amino-acid sequence, 238 residues long: Ribonuclease PH (238 aa).

Phosphate is bound by residues R86 and 124-126; that span reads GTR.

It belongs to the RNase PH family. Homohexameric ring arranged as a trimer of dimers.

It catalyses the reaction tRNA(n+1) + phosphate = tRNA(n) + a ribonucleoside 5'-diphosphate. Its function is as follows. Phosphorolytic 3'-5' exoribonuclease that plays an important role in tRNA 3'-end maturation. Removes nucleotide residues following the 3'-CCA terminus of tRNAs; can also add nucleotides to the ends of RNA molecules by using nucleoside diphosphates as substrates, but this may not be physiologically important. Probably plays a role in initiation of 16S rRNA degradation (leading to ribosome degradation) during starvation. The polypeptide is Ribonuclease PH (Enterobacter sp. (strain 638)).